The sequence spans 310 residues: MPKVRTKDIMEQFHLELVSGEEGINRPITISDLSRPGIEMAGYFTYYPKERVQLLGKTELSFFEQLPERERKQRMMSLCTDITPAIILSRDREVPKELIEASNENGVPVLRSSLKTTRLSSRLTNFLESKLAPTTAIHGVLVDVYGVGVLLIGKSGVGKSETALELVKRGHRLVADDCVEIRQEDQDTLVGSAPELIEHLLEIRGLGIINVMTLFGAGAVRSYKRITIVMNLELWEQGKQYDRLGLEEEKMRIIDTDVPKLTIPVRPGRNLAVIIEVAAMNFRLKRMGHNAAEQFTSKLADVIEDNGQDE.

Residues His-138 and Lys-159 contribute to the active site. Gly-153–Ser-160 lines the ATP pocket. Ser-160 is a binding site for Mg(2+). The active-site Proton acceptor; for phosphorylation activity. Proton donor; for dephosphorylation activity is the Asp-177. Residues Leu-201–Asn-210 form an important for the catalytic mechanism of both phosphorylation and dephosphorylation region. A Mg(2+)-binding site is contributed by Glu-202. Arg-243 is a catalytic residue. The interval Pro-264 to Arg-269 is important for the catalytic mechanism of dephosphorylation.

The protein belongs to the HPrK/P family. Homohexamer. The cofactor is Mg(2+).

It catalyses the reaction [HPr protein]-L-serine + ATP = [HPr protein]-O-phospho-L-serine + ADP + H(+). It carries out the reaction [HPr protein]-O-phospho-L-serine + phosphate + H(+) = [HPr protein]-L-serine + diphosphate. Its function is as follows. Catalyzes the ATP- as well as the pyrophosphate-dependent phosphorylation of a specific serine residue in HPr, a phosphocarrier protein of the phosphoenolpyruvate-dependent sugar phosphotransferase system (PTS). HprK/P also catalyzes the pyrophosphate-producing, inorganic phosphate-dependent dephosphorylation (phosphorolysis) of seryl-phosphorylated HPr (P-Ser-HPr). The two antagonistic activities of HprK/P are regulated by several intracellular metabolites, which change their concentration in response to the absence or presence of rapidly metabolisable carbon sources (glucose, fructose, etc.) in the growth medium. Also phosphorylates/dephosphorylates the HPr-like catabolite repression protein crh on a specific serine residue. Therefore, by controlling the phosphorylation state of HPr and crh, HPrK/P is a sensor enzyme that plays a major role in the regulation of carbon metabolism and sugar transport: it mediates carbon catabolite repression (CCR), and regulates PTS-catalyzed carbohydrate uptake and inducer exclusion. The chain is HPr kinase/phosphorylase from Bacillus pumilus (strain SAFR-032).